The sequence spans 341 residues: S-adenosylmethionine:tRNA ribosyltransferase-isomerase (341 aa).

This sequence belongs to the QueA family. As to quaternary structure, monomer.

Its subcellular location is the cytoplasm. It catalyses the reaction 7-aminomethyl-7-carbaguanosine(34) in tRNA + S-adenosyl-L-methionine = epoxyqueuosine(34) in tRNA + adenine + L-methionine + 2 H(+). It functions in the pathway tRNA modification; tRNA-queuosine biosynthesis. Functionally, transfers and isomerizes the ribose moiety from AdoMet to the 7-aminomethyl group of 7-deazaguanine (preQ1-tRNA) to give epoxyqueuosine (oQ-tRNA). This Desulfitobacterium hafniense (strain DSM 10664 / DCB-2) protein is S-adenosylmethionine:tRNA ribosyltransferase-isomerase.